We begin with the raw amino-acid sequence, 216 residues long: Small ribosomal subunit protein uS3c (216 aa).

The KH type-2 domain occupies 43 to 118 (IKNYIQKNRR…KLNIAIVKVT (76 aa)).

It belongs to the universal ribosomal protein uS3 family. As to quaternary structure, part of the 30S ribosomal subunit.

Its subcellular location is the plastid. The protein resides in the chloroplast. This chain is Small ribosomal subunit protein uS3c (rps3), found in Phaseolus angularis (Azuki bean).